The chain runs to 130 residues: MAQVEYRGTGRRKNSVARVRLVPGEGNITVNNRDVREYLPFESLILDLNQPFDVTETKGNYDVLVNVHGGGFTGQAQAIRHGIARALLEADPEYRGSLKRAGLLTRDPRMKERKKPGLKAARRSPQFSKR.

Positions 99-130 (KRAGLLTRDPRMKERKKPGLKAARRSPQFSKR) are disordered. Residues 111 to 130 (KERKKPGLKAARRSPQFSKR) are compositionally biased toward basic residues.

The protein belongs to the universal ribosomal protein uS9 family.

This Staphylococcus aureus (strain Mu3 / ATCC 700698) protein is Small ribosomal subunit protein uS9.